The primary structure comprises 593 residues: Efflux pump FUB11 (593 aa).

Residues 1–45 (MAIDPQPSSPSLSSETIANDTIGNDNNVNEPSVEPKTQEHQHTVP) form a disordered region. Positions 9–30 (SPSLSSETIANDTIGNDNNVNE) are enriched in polar residues. Residue N19 is glycosylated (N-linked (GlcNAc...) asparagine). The next 12 helical transmembrane spans lie at 98–118 (WAFV…SSAY), 135–155 (VATL…LVWA), 167–187 (FFFT…AGSI), 195–215 (FLTG…IADM), 227–247 (MFSG…GFLG), 254–274 (WLHG…TVFI), 337–357 (IYIS…PIVF), 367–387 (IGGL…ISFA), 410–430 (LPPA…FAWT), 438–458 (IVPI…FMAL), 468–488 (IFAA…GAAF), and 503–523 (WASS…FLFY). The tract at residues 570-593 (THNSHASAAHSHGHRRSLSYTRSA) is disordered.

The protein belongs to the major facilitator superfamily. DHA1 family. Polyamines/proton antiporter (TC 2.A.1.2.16) subfamily.

The protein localises to the cell membrane. In terms of biological role, efflux pump involved in export of fusaric acid, a mycotoxin with low to moderate toxicity to animals and humans, but with high phytotoxic properties. Constitutes a self-protecting mechanism of the fungus against critical levels of FSA within the cell. This is Efflux pump FUB11 from Gibberella moniliformis (strain M3125 / FGSC 7600) (Maize ear and stalk rot fungus).